The chain runs to 350 residues: Protein-glutamate methylesterase/protein-glutamine glutaminase 1 (350 aa).

One can recognise a Response regulatory domain in the interval Lys3–Leu121. The residue at position 54 (Asp54) is a 4-aspartylphosphate. Residues Pro148–Val342 form the CheB-type methylesterase domain. Residues Ser170, His197, and Asp290 contribute to the active site.

It belongs to the CheB family. Post-translationally, phosphorylated by CheA. Phosphorylation of the N-terminal regulatory domain activates the methylesterase activity.

The protein localises to the cytoplasm. It catalyses the reaction [protein]-L-glutamate 5-O-methyl ester + H2O = L-glutamyl-[protein] + methanol + H(+). It carries out the reaction L-glutaminyl-[protein] + H2O = L-glutamyl-[protein] + NH4(+). Functionally, involved in chemotaxis. Part of a chemotaxis signal transduction system that modulates chemotaxis in response to various stimuli. Catalyzes the demethylation of specific methylglutamate residues introduced into the chemoreceptors (methyl-accepting chemotaxis proteins or MCP) by CheR. Also mediates the irreversible deamidation of specific glutamine residues to glutamic acid. The chain is Protein-glutamate methylesterase/protein-glutamine glutaminase 1 from Syntrophus aciditrophicus (strain SB).